Consider the following 607-residue polypeptide: Homologous recombination OB-fold protein (607 aa).

4 disordered regions span residues 25–49, 84–108, 196–308, and 531–581; these read LRPN…SYPA, ISSS…SGRQ, PWPS…TTVT, and LKPP…DDLD. Polar residues-rich tracts occupy residues 27 to 49 and 92 to 108; these read PNSS…SYPA and QQRM…SGRQ. Serine 30 is modified (phosphoserine). An Asymmetric dimethylarginine modification is found at arginine 281. Over residues 295–308 the composition is skewed to low complexity; sequence SPFSTPRSTSTTVT. Residues 570-581 show a composition bias toward acidic residues; it reads PEEELPEADDLD.

Interacts with MCM8; this interaction is necessary for MCM8-MCM9 helicase complex recruitment to DNA damage sites. Interacts with RPA1; this interaction associates HROB with the RPA complex.

It is found in the nucleus. The protein localises to the chromosome. DNA-binding protein involved in homologous recombination that acts by recruiting the MCM8-MCM9 helicase complex to sites of DNA damage to promote DNA repair synthesis. The chain is Homologous recombination OB-fold protein from Rattus norvegicus (Rat).